A 444-amino-acid chain; its full sequence is Trigger factor (444 aa).

The PPIase FKBP-type domain occupies glycine 185–phenylalanine 270.

This sequence belongs to the FKBP-type PPIase family. Tig subfamily.

It localises to the cytoplasm. It catalyses the reaction [protein]-peptidylproline (omega=180) = [protein]-peptidylproline (omega=0). Functionally, involved in protein export. Acts as a chaperone by maintaining the newly synthesized protein in an open conformation. Functions as a peptidyl-prolyl cis-trans isomerase. In Wolbachia pipientis wMel, this protein is Trigger factor.